Reading from the N-terminus, the 191-residue chain is Cell division protein SepF (191 aa).

The interval 150-191 (TSSSPEEASPSSVSPKNTPQYSVENNTAPEPAWGNSKLSAFS) is disordered. Residues 151–164 (SSSPEEASPSSVSP) show a composition bias toward low complexity. The span at 165–177 (KNTPQYSVENNTA) shows a compositional bias: polar residues.

The protein belongs to the SepF family. As to quaternary structure, homodimer. Interacts with FtsZ.

Its subcellular location is the cytoplasm. Its function is as follows. Cell division protein that is part of the divisome complex and is recruited early to the Z-ring. Probably stimulates Z-ring formation, perhaps through the cross-linking of FtsZ protofilaments. Its function overlaps with FtsA. The sequence is that of Cell division protein SepF from Prochlorococcus marinus (strain MIT 9312).